The sequence spans 428 residues: Enolase (428 aa).

Gln163 contacts (2R)-2-phosphoglycerate. The active-site Proton donor is the Glu205. Mg(2+) is bound by residues Asp242, Glu286, and Asp313. (2R)-2-phosphoglycerate-binding residues include Lys338, Arg367, Ser368, and Lys389. Residue Lys338 is the Proton acceptor of the active site.

Belongs to the enolase family. The cofactor is Mg(2+).

Its subcellular location is the cytoplasm. The protein localises to the secreted. It is found in the cell surface. It carries out the reaction (2R)-2-phosphoglycerate = phosphoenolpyruvate + H2O. The protein operates within carbohydrate degradation; glycolysis; pyruvate from D-glyceraldehyde 3-phosphate: step 4/5. Functionally, catalyzes the reversible conversion of 2-phosphoglycerate (2-PG) into phosphoenolpyruvate (PEP). It is essential for the degradation of carbohydrates via glycolysis. In Bordetella avium (strain 197N), this protein is Enolase.